The primary structure comprises 121 residues: MKFDMLWSKIHRATVTDANLNYVGSITIDEELMEAAELLVGQKVEILDVNNGERFSTYVIRGERGSREICLNGAAARKVAIGDKIIIVAYAQYDRSELSSYKPTVVLVDEKNDIVQIKHEV.

Catalysis depends on Ser-25, which acts as the Schiff-base intermediate with substrate; via pyruvic acid. Ser-25 is subject to Pyruvic acid (Ser). Thr-57 is a binding site for substrate. Tyr-58 serves as the catalytic Proton donor. Position 73-75 (73-75 (GAA)) interacts with substrate.

Belongs to the PanD family. As to quaternary structure, heterooctamer of four alpha and four beta subunits. It depends on pyruvate as a cofactor. Post-translationally, is synthesized initially as an inactive proenzyme, which is activated by self-cleavage at a specific serine bond to produce a beta-subunit with a hydroxyl group at its C-terminus and an alpha-subunit with a pyruvoyl group at its N-terminus.

It localises to the cytoplasm. It carries out the reaction L-aspartate + H(+) = beta-alanine + CO2. It functions in the pathway cofactor biosynthesis; (R)-pantothenate biosynthesis; beta-alanine from L-aspartate: step 1/1. Catalyzes the pyruvoyl-dependent decarboxylation of aspartate to produce beta-alanine. The sequence is that of Aspartate 1-decarboxylase from Wolinella succinogenes (strain ATCC 29543 / DSM 1740 / CCUG 13145 / JCM 31913 / LMG 7466 / NCTC 11488 / FDC 602W) (Vibrio succinogenes).